Here is a 117-residue protein sequence, read N- to C-terminus: NADH-ubiquinone oxidoreductase chain 3 (117 aa).

3 helical membrane passes run 1–21 (MLMLSTMTLIIFIITIVVMML), 58–78 (FLIAIIFLIFDVEIALLLPMI), and 86–106 (LMNWTITSLFFIFILLIGLYH).

It belongs to the complex I subunit 3 family.

It is found in the mitochondrion membrane. It carries out the reaction a ubiquinone + NADH + 5 H(+)(in) = a ubiquinol + NAD(+) + 4 H(+)(out). In terms of biological role, core subunit of the mitochondrial membrane respiratory chain NADH dehydrogenase (Complex I) that is believed to belong to the minimal assembly required for catalysis. Complex I functions in the transfer of electrons from NADH to the respiratory chain. The immediate electron acceptor for the enzyme is believed to be ubiquinone. The polypeptide is NADH-ubiquinone oxidoreductase chain 3 (mt:ND3) (Anopheles gambiae (African malaria mosquito)).